Here is a 360-residue protein sequence, read N- to C-terminus: MKFGNFLLTYQPPQFSQTEVMKRLVKLGRISEECGFDTVWLLEHHFTEFGLLGNPYVAAAYLLGATKKLNVGTAAIVLPTAHPVRQLEDVNLLDQMSKGRFRFGICRGLYNKDFRVFGTDMNNSRALAECWYGLIKNGMTEGYMEADNEHIKFHKVKVNPAAYSRGGAPVYVVAESASTTEWAAQFGLPMILSWIINTNEKKAQLELYNEVAQEYGHDIHNIDHCLSYITSVDHDSIKAKEICRKFLGHWYDSYVNATTIFDDSDQTRGYDFNKGQWRDFVLKGHKDTNRRIDYSYEINPVGTPQECIDIIQKDIDATGISNICCGFEANGTVDEIIASMKLFQSDVMPFLKEKQRSLLY.

The protein belongs to the bacterial luciferase oxidoreductase family. Heterodimer of an alpha and a beta chain.

It catalyses the reaction a long-chain fatty aldehyde + FMNH2 + O2 = a long-chain fatty acid + hnu + FMN + H2O + 2 H(+). Its function is as follows. Light-emitting reaction in luminous bacteria. The protein is Alkanal monooxygenase alpha chain (luxA) of Photorhabdus luminescens (Xenorhabdus luminescens).